The following is a 751-amino-acid chain: Kelch-like protein 1 (751 aa).

Low complexity-rich tracts occupy residues 25-36 (PSPASSSPAGGS) and 74-90 (SSSS…ASSS). Disordered regions lie at residues 25–54 (PSPA…GPSQ), 69–98 (FWKK…LNGT), and 157–184 (SSIQ…SDLD). Over residues 170 to 184 (LTSTNHSLTPQSDLD) the composition is skewed to polar residues. One can recognise a BTB domain in the interval 215 to 282 (CDVILIVGNR…AYTGCLELKE (68 aa)). Kelch repeat units follow at residues 463 to 509 (TLYA…VIDD), 510 to 556 (KLFV…VLEG), 558 to 603 (IYAV…ALNG), 604 to 650 (KLYS…TCDG), 652 to 703 (LYAV…LLGD), and 704 to 750 (RLYA…VIKQ).

As to expression, highly expressed in brain.

Its subcellular location is the cytoplasm. It is found in the cytoskeleton. Its function is as follows. May play a role in organizing the actin cytoskeleton of the brain cells. This chain is Kelch-like protein 1 (Klhl1), found in Mus musculus (Mouse).